Consider the following 272-residue polypeptide: MEMFDNIKNVGKLIRLERIFDKKSEKTVIIPMDHGVSSGPLDGIKDMRITTNAVADGGANAVLGHKGLVRHGHRGYGRDIGLIIHMSAGTSISPDPNKKVIVTTVEDAMRMGADAVSLHVNVGAESDFEMYRDLGLISETCEHWGMPLIAMMYPRGPKIKDEKDPEVVAHAARLGAELGADIIKTNYTGDPDTFKEVVKGCPAPIVIAGGPKTNTDEEFLQMVKDAMHAGGKGVASGRNVFQHKDVKGITSAICKIVHEDVEVEEALKEIKI.

Catalysis depends on aspartate 33, which acts as the Proton acceptor. Residues 33 to 37 and 153 to 155 contribute to the 1-deoxy-D-threo-hexo-2,5-diulose 6-phosphate site; these read DHGVS and YPR. The active-site Proton donor is tyrosine 153. Catalysis depends on lysine 184, which acts as the Schiff-base intermediate with substrate. 1-deoxy-D-threo-hexo-2,5-diulose 6-phosphate is bound by residues 209-210 and 237-238; these read GG and GR.

It belongs to the DeoC/FbaB aldolase family. ADHS subfamily. In terms of assembly, homodecamer.

It carries out the reaction 1-deoxy-D-threo-hexo-2,5-diulose 6-phosphate + L-aspartate 4-semialdehyde = 2,3-dioxopropyl phosphate + 2-amino-2,3,7-trideoxy-D-lyxo-hept-6-ulosonate. Functionally, catalyzes a transaldol reaction between 6-deoxy-5-ketofructose 1-phosphate (DKFP) and L-aspartate semialdehyde (ASA) with an elimination of hydroxypyruvaldehyde phosphate to yield 2-amino-3,7-dideoxy-D-threo-hept-6-ulosonate (ADH). Plays a key role in an alternative pathway of the biosynthesis of 3-dehydroquinate (DHQ), which is involved in the canonical pathway for the biosynthesis of aromatic amino acids and which is also a precursor for the biosynthesis of p-aminobenzoic acid (PABA) in M.maripaludis. Does not possess fructose-bisphosphate (FBP) aldolase activity. The chain is 2-amino-3,7-dideoxy-D-threo-hept-6-ulosonate synthase from Methanococcus maripaludis (strain DSM 14266 / JCM 13030 / NBRC 101832 / S2 / LL).